The sequence spans 241 residues: 3-deoxy-D-manno-octulosonic acid kinase (241 aa).

D171 is a catalytic residue.

The protein belongs to the protein kinase superfamily. KdkA/RfaP family.

Its subcellular location is the cell inner membrane. It catalyses the reaction an alpha-Kdo-(2-&gt;6)-lipid IVA + ATP = a 4-O-phospho-alpha-Kdo-(2-&gt;6)-lipid IVA + ADP + H(+). It participates in bacterial outer membrane biogenesis; LPS core biosynthesis. Its function is as follows. Catalyzes the ATP-dependent phosphorylation of the 3-deoxy-D-manno-octulosonic acid (Kdo) residue in Kdo-lipid IV(A) at the 4-OH position. This chain is 3-deoxy-D-manno-octulosonic acid kinase, found in Haemophilus influenzae (strain PittEE).